Reading from the N-terminus, the 284-residue chain is Tropomyosin (284 aa).

A coiled-coil region spans residues 1–284 (MEAIKNKMQA…DQTFAELTGY (284 aa)). The interval 22–43 (AEIAEQKSRDANLRAEKSEEEV) is disordered.

This sequence belongs to the tropomyosin family. Homodimer.

Tropomyosin, in association with the troponin complex, plays a central role in the calcium dependent regulation of muscle contraction. This is Tropomyosin from Lepidoglyphus destructor (Storage mite).